Here is a 619-residue protein sequence, read N- to C-terminus: Chaperone protein HscA homolog (619 aa).

This sequence belongs to the heat shock protein 70 family.

Functionally, chaperone involved in the maturation of iron-sulfur cluster-containing proteins. Has a low intrinsic ATPase activity which is markedly stimulated by HscB. In Shewanella frigidimarina (strain NCIMB 400), this protein is Chaperone protein HscA homolog.